We begin with the raw amino-acid sequence, 112 residues long: Large ribosomal subunit protein bL17 (112 aa).

The protein belongs to the bacterial ribosomal protein bL17 family. In terms of assembly, part of the 50S ribosomal subunit. Contacts protein L32.

The polypeptide is Large ribosomal subunit protein bL17 (Moorella thermoacetica (strain ATCC 39073 / JCM 9320)).